Reading from the N-terminus, the 248-residue chain is Probable transcriptional regulatory protein RPE_4771 (248 aa).

A disordered region spans residues 1–21; the sequence is MAGHSQFKNIMHRKGRQDAQK.

The protein belongs to the TACO1 family.

Its subcellular location is the cytoplasm. The chain is Probable transcriptional regulatory protein RPE_4771 from Rhodopseudomonas palustris (strain BisA53).